The sequence spans 287 residues: Protease HtpX (287 aa).

2 helical membrane-spanning segments follow: residues 4 to 24 (VMLFLATNLAVVLVLSVVLNI) and 36 to 56 (LSGLLVMAAVFGFGGSFISLM). Position 143 (His143) interacts with Zn(2+). Glu144 is a catalytic residue. His147 serves as a coordination point for Zn(2+). 2 helical membrane passes run 158 to 178 (LMQGVVNTFVIFLSRFIANIV) and 192 to 212 (MVYFGVSMVLELVFGFLASFI). Glu221 is a Zn(2+) binding site.

Belongs to the peptidase M48B family. Requires Zn(2+) as cofactor.

The protein resides in the cell inner membrane. This chain is Protease HtpX, found in Vibrio atlanticus (strain LGP32) (Vibrio splendidus (strain Mel32)).